The chain runs to 324 residues: Transcription factor MYB74 (324 aa).

HTH myb-type domains lie at 10-62 (KNGL…TNYL) and 63-117 (RPDI…RKRL). 2 DNA-binding regions (H-T-H motif) span residues 38-62 (WRTL…TNYL) and 90-113 (WSAI…NTHI).

As to expression, highly expressed in flowers and at lower levels in rosette leaves and cauline leaves. Expressed at low levels in roots, stems and siliques.

It localises to the nucleus. Functionally, probable transcription factor that may function in salt stress response. In Arabidopsis thaliana (Mouse-ear cress), this protein is Transcription factor MYB74.